A 109-amino-acid chain; its full sequence is MSAQPVDIQIFGRALRVNCPPEQLDALNQAAEDLNQRLQDLKVRTRVTNTEQLVFIAALNVCHELAQERLKTRDYAANMEQRIRMLQQTIEQALLEQGRITERPGTSFE.

Residues 21–99 (PEQLDALNQA…IEQALLEQGR (79 aa)) adopt a coiled-coil conformation.

The protein belongs to the ZapA family. Type 1 subfamily. As to quaternary structure, homodimer. Interacts with FtsZ.

The protein resides in the cytoplasm. In terms of biological role, activator of cell division through the inhibition of FtsZ GTPase activity, therefore promoting FtsZ assembly into bundles of protofilaments necessary for the formation of the division Z ring. It is recruited early at mid-cell but it is not essential for cell division. The sequence is that of Cell division protein ZapA from Edwardsiella ictaluri (strain 93-146).